A 601-amino-acid chain; its full sequence is Leucine zipper putative tumor suppressor 1 (601 aa).

The N-myristoyl glycine moiety is linked to residue glycine 2. The tract at residues 135-190 is disordered; that stretch reads GAILHSSPESTNHQLHPMPPDKPKEQELKPGLCSGALSDSGRNSMSSLPTHSTTSS. Basic and acidic residues predominate over residues 153-162; the sequence is PPDKPKEQEL. The segment covering 174-190 has biased composition (polar residues); the sequence is SGRNSMSSLPTHSTTSS. The stretch at 255–573 forms a coiled coil; sequence PLSTDECTIQ…RLEKALQQLA (319 aa).

The protein belongs to the LZTS family. As to quaternary structure, binds EEF1G, TLK2 and CDK1. Phosphorylated on serine residues. Hyperphosphorylated by the cAMP-dependent kinase PKA during cell-cycle progression. Highly expressed in brain, in particular in cortex, the CA2 region of the hippocampus, olfactory bulb, striatum and pons. Not detectable in the other tissues tested.

The protein localises to the cytoplasm. It is found in the cell membrane. The protein resides in the cell projection. Its subcellular location is the dendritic spine. It localises to the postsynaptic density. The protein localises to the synapse. Involved in the regulation of cell growth. May stabilize the active CDC2-cyclin B1 complex and thereby contribute to the regulation of the cell cycle and the prevention of uncontrolled cell proliferation. May act as tumor suppressor. This chain is Leucine zipper putative tumor suppressor 1 (Lzts1), found in Rattus norvegicus (Rat).